A 431-amino-acid polypeptide reads, in one-letter code: Adenylosuccinate synthetase (431 aa).

GTP is bound by residues 13 to 19 (GDEGKGK) and 41 to 43 (GHT). Asp-14 functions as the Proton acceptor in the catalytic mechanism. Positions 14 and 41 each coordinate Mg(2+). IMP-binding positions include 14 to 17 (DEGK), 39 to 42 (NAGH), Thr-130, Arg-144, Gln-225, Thr-240, and Arg-304. His-42 (proton donor) is an active-site residue. 300–306 (AVTGRPR) is a binding site for substrate. Residues Arg-306, 332 to 334 (KLD), and 415 to 417 (STG) each bind GTP.

This sequence belongs to the adenylosuccinate synthetase family. Homodimer. Mg(2+) serves as cofactor.

The protein resides in the cytoplasm. The enzyme catalyses IMP + L-aspartate + GTP = N(6)-(1,2-dicarboxyethyl)-AMP + GDP + phosphate + 2 H(+). Its pathway is purine metabolism; AMP biosynthesis via de novo pathway; AMP from IMP: step 1/2. Plays an important role in the de novo pathway of purine nucleotide biosynthesis. Catalyzes the first committed step in the biosynthesis of AMP from IMP. This chain is Adenylosuccinate synthetase, found in Legionella pneumophila (strain Lens).